A 128-amino-acid chain; its full sequence is Small ribosomal subunit protein uS8c (128 aa).

This sequence belongs to the universal ribosomal protein uS8 family. In terms of assembly, part of the 30S ribosomal subunit.

The protein localises to the plastid. It is found in the chloroplast. Its function is as follows. One of the primary rRNA binding proteins, it binds directly to 16S rRNA central domain where it helps coordinate assembly of the platform of the 30S subunit. The chain is Small ribosomal subunit protein uS8c (rps8) from Welwitschia mirabilis (Tree tumbo).